The following is a 187-amino-acid chain: UPF0301 protein ESA_00394 (187 aa).

The protein belongs to the UPF0301 (AlgH) family.

The chain is UPF0301 protein ESA_00394 from Cronobacter sakazakii (strain ATCC BAA-894) (Enterobacter sakazakii).